Consider the following 461-residue polypeptide: Kynurenine 3-monooxygenase (461 aa).

The next 2 helical transmembrane spans lie at 395–415 and 432–452; these read GFMN…VTFT and ILSN…AIGI.

It belongs to the aromatic-ring hydroxylase family. KMO subfamily. The cofactor is FAD.

The protein resides in the mitochondrion. It localises to the membrane. It catalyses the reaction L-kynurenine + NADPH + O2 + H(+) = 3-hydroxy-L-kynurenine + NADP(+) + H2O. It functions in the pathway cofactor biosynthesis; NAD(+) biosynthesis; quinolinate from L-kynurenine: step 1/3. Catalyzes the hydroxylation of L-kynurenine (L-Kyn) to form 3-hydroxy-L-kynurenine (L-3OHKyn). Required for synthesis of quinolinic acid. The polypeptide is Kynurenine 3-monooxygenase (Caenorhabditis briggsae).